An 87-amino-acid chain; its full sequence is U14-lycotoxin-Ls1a (87 aa).

The first 20 residues, 1-20 (MNSKVFAALLLLALSTCVLS), serve as a signal peptide directing secretion. A WAP domain is found at 21–66 (EKYCPTPRNTSCKKMNIRNNCCRDSDCTSNAFCCAEPCGNFCHKAS). 5 disulfides stabilise this stretch: C24–C54, C32–C58, C41–C53, C42–C80, and C47–C62.

It belongs to the venom protein 11 family. 01 (wap-1) subfamily. In terms of processing, contains 5 disulfide bonds. As to expression, expressed by the venom gland.

It is found in the secreted. In terms of biological role, has antibacterial activity. The sequence is that of U14-lycotoxin-Ls1a from Lycosa singoriensis (Wolf spider).